Consider the following 387-residue polypeptide: Mannitol-1-phosphate 5-dehydrogenase (387 aa).

3 to 14 (AVHFGAGNIGRG) is an NAD(+) binding site.

Belongs to the mannitol dehydrogenase family.

The enzyme catalyses D-mannitol 1-phosphate + NAD(+) = beta-D-fructose 6-phosphate + NADH + H(+). The chain is Mannitol-1-phosphate 5-dehydrogenase from Pseudarthrobacter chlorophenolicus (strain ATCC 700700 / DSM 12829 / CIP 107037 / JCM 12360 / KCTC 9906 / NCIMB 13794 / A6) (Arthrobacter chlorophenolicus).